A 107-amino-acid chain; its full sequence is Proteinase inhibitor I-A (107 aa).

The first 22 residues, 1-22 (MVKFAHVVAFLLLASLIQPLTA), serve as a signal peptide directing secretion. A propeptide spanning residues 23-36 (RDLEINVLQLDVSQ) is cleaved from the precursor.

This sequence belongs to the protease inhibitor I13 (potato type I serine protease inhibitor) family.

The protein resides in the secreted. The protein is Proteinase inhibitor I-A (TIMPB) of Nicotiana tabacum (Common tobacco).